A 453-amino-acid polypeptide reads, in one-letter code: Divalent metal cation transporter MntH (453 aa).

11 helical membrane-spanning segments follow: residues 39 to 59 (LAFLGPGLLVAVGYMDPGNWI), 66 to 86 (AQYGYTLLFIILISSLSAMLL), 114 to 134 (AIMFWIIAELAIIATDIAEVI), 146 to 166 (IPLIVGALITVFDVFLLLFIM), 175 to 195 (AIVGTLIFTVLAIFVFEVYIS), 217 to 237 (GILYIALGIIGATIMPHNLYL), 270 to 290 (LSIAFVVNCLLLTLGAALFFG), 310 to 330 (PALGATLGGIMSTLFAVALLA), 362 to 382 (LITRSLAVIPVIICLIVFKGN), 388 to 408 (QLLVFSQVFLSIALPFSLIPL), and 427 to 447 (INIISWLLIIVLSGLNVYLII).

The protein belongs to the NRAMP family.

Its subcellular location is the cell membrane. Its function is as follows. H(+)-stimulated, divalent metal cation uptake system. This Staphylococcus epidermidis (strain ATCC 12228 / FDA PCI 1200) protein is Divalent metal cation transporter MntH.